A 261-amino-acid polypeptide reads, in one-letter code: tRNA pseudouridine synthase A (261 aa).

Residue Asp51 is the Nucleophile of the active site. Tyr109 contacts substrate.

This sequence belongs to the tRNA pseudouridine synthase TruA family. As to quaternary structure, homodimer.

It carries out the reaction uridine(38/39/40) in tRNA = pseudouridine(38/39/40) in tRNA. In terms of biological role, formation of pseudouridine at positions 38, 39 and 40 in the anticodon stem and loop of transfer RNAs. The chain is tRNA pseudouridine synthase A from Haemophilus ducreyi (strain 35000HP / ATCC 700724).